Consider the following 170-residue polypeptide: Cathelicidin antimicrobial peptide (170 aa).

A signal peptide spans M1 to A30. Positions Q31–R131 are cleaved as a propeptide — cathelin-like domain (CLD). 2 cysteine pairs are disulfide-bonded: C86-C97 and C108-C125. The interval L150–G162 is active core.

The protein belongs to the cathelicidin family. Monomer, homodimer or homotrimer (in vitro). Oligomerizes as tetra- or hexamer in solution (in vitro). Proteolytically cleaved by proteinase PRTN3 into antibacterial peptide LL-37. Proteolytically cleaved by cathepsin CTSG and neutrophil elastase ELANE. Post-translationally, resistant to proteolytic degradation in solution, and when bound to both zwitterionic (mimicking mammalian membranes) and negatively charged membranes (mimicking bacterial membranes). In terms of processing, after secretion onto the skin surface, the CAMP gene product is processed by a serine protease-dependent mechanism into multiple novel antimicrobial peptides distinct from and shorter than cathelicidin LL-37. These peptides show enhanced antimicrobial action, acquiring the ability to kill skin pathogens such as S.aureus, E.coli and C.albicans. These peptides have lost the ability to stimulate CXCL8/IL8 release from keratinocytes. The peptides act synergistically, killing bacteria at lower concentrations when present together, and maintain activity at increased salt condition.

Its subcellular location is the secreted. It is found in the vesicle. Antimicrobial protein that is an integral component of the innate immune system. Binds to bacterial lipopolysaccharides (LPS). Acts via neutrophil N-formyl peptide receptors to enhance the release of CXCL2. Postsecretory processing generates multiple cathelicidin antimicrobial peptides with various lengths which act as a topical antimicrobial defense in sweat on skin. The unprocessed precursor form, cathelicidin antimicrobial peptide, inhibits the growth of Gram-negative E.coli and E.aerogenes with efficiencies comparable to that of the mature peptide LL-37 (in vitro). Functionally, antimicrobial peptide that is an integral component of the innate immune system. Binds to bacterial lipopolysaccharides (LPS). Causes membrane permeabilization by forming transmembrane pores (in vitro). Causes lysis of E.coli. Exhibits antimicrobial activity against Gram-negative bacteria such as P.aeruginosa, S.typhimurium, E.aerogenes, E.coli and P.syringae, Gram-positive bacteria such as L.monocytogenes, S.epidermidis, S.pyogenes and S.aureus, as well as vancomycin-resistant enterococci (in vitro). Exhibits antimicrobial activity against methicillin-resistant S.aureus, P.mirabilis, and C.albicans in low-salt media, but not in media containing 100 mM NaCl (in vitro). Forms chiral supramolecular assemblies with quinolone signal (PQS) molecules of P.aeruginosa, which may lead to interference of bacterial quorum signaling and perturbance of bacterial biofilm formation. May form supramolecular fiber-like assemblies on bacterial membranes. Induces cytokine and chemokine producation as well as TNF/TNFA and CSF2/GMCSF production in normal human keratinocytes. Exhibits hemolytic activity against red blood cells. In terms of biological role, exhibits antimicrobial activity against E.coli and B.megaterium (in vitro). This is Cathelicidin antimicrobial peptide from Macaca fascicularis (Crab-eating macaque).